The following is a 307-amino-acid chain: Protein PROCA1 (307 aa).

Disordered regions lie at residues 134 to 155 (NHLS…EVPD) and 183 to 307 (RKEK…PNLS). The segment covering 200–214 (LKKKAKGKLTKKKTP) has biased composition (basic residues). Polar residues predominate over residues 216-228 (KSESSPADLSQSV). At serine 220 the chain carries Phosphoserine. Residues 235 to 248 (PESSPESPGGLESE) are compositionally biased toward low complexity. Phosphoserine is present on residues serine 250, serine 259, serine 260, serine 298, and serine 307. Residues 250–260 (SCERGKERPSS) show a composition bias toward basic and acidic residues.

This sequence belongs to the PROCA1 family.

This Mus musculus (Mouse) protein is Protein PROCA1 (Proca1).